The primary structure comprises 315 residues: Diacylglycerol kinase (315 aa).

The region spanning 1–132 is the DAGKc domain; sequence MRKRARIIYN…VDIGKMNNRY (132 aa). Residues 10 to 14, T41, 67 to 73, and T94 each bind ATP; these read NPTSG and GDGTLNE. Residues K213, D216, and Y218 each contribute to the Mg(2+) site. The Proton acceptor role is filled by E273.

Belongs to the diacylglycerol/lipid kinase family. As to quaternary structure, homodimer. It depends on Mg(2+) as a cofactor.

It carries out the reaction a 1,2-diacyl-sn-glycerol + ATP = a 1,2-diacyl-sn-glycero-3-phosphate + ADP + H(+). Functionally, catalyzes the phosphorylation of diacylglycerol (DAG) into phosphatidic acid. Is a key enzyme involved in the production of lipoteichoic acid by reintroducing DAG formed from the breakdown of membrane phospholipids into the phosphatidylglycerol biosynthetic pathway. The polypeptide is Diacylglycerol kinase (dagK) (Staphylococcus aureus (strain MRSA252)).